Consider the following 21-residue polypeptide: Serine protease inhibitor 3 (21 aa).

Belongs to the protease inhibitor I3 (leguminous Kunitz-type inhibitor) family. Tubers.

Its subcellular location is the vacuole. Inhibits trypsin and chymotrypsin (serine proteases). Does not inhibit elastase, subtilisin, cathepsin L nor papain (serine and cysteine proteases). Protects the plant by inhibiting proteases of invading organisms, decreasing both hyphal growth and zoospores germination of Phytophthora infestans. This chain is Serine protease inhibitor 3, found in Solanum tuberosum (Potato).